Reading from the N-terminus, the 1069-residue chain is Kinesin-like protein vab-8 (1069 aa).

Residues 15–325 form the Kinesin motor domain; it reads PLRTIPKLRL…ACKIARTRVK (311 aa). Disordered regions lie at residues 328 to 374, 391 to 436, and 572 to 598; these read MGHG…LESG, SRTT…KSSP, and EQEE…RILS. Interaction with unc-51 regions lie at residues 331–517 and 517–719; these read GRKP…KSKY and YNLD…TVVD. Low complexity-rich tracts occupy residues 339-364 and 391-407; these read SSGT…GTPR and SRTT…TPTS. Residues 403-877 are interaction with unc-73; that stretch reads STPTSIRPLH…SAERDRKTSK (475 aa). Positions 719 to 769 form a coiled coil; it reads DWSQIERKKEREKDAMEEEKRKEVLRERRAKLKITELEIKRERNMIDKELD. A disordered region spans residues 786-960; that stretch reads SLSPCRGGRT…RQSYSASSGY (175 aa). The span at 824 to 847 shows a compositional bias: low complexity; it reads GGSLAKLSASGASGSGPPSSPSLG. Over residues 883–897 the composition is skewed to basic and acidic residues; that stretch reads SSKERRSSGSKEELQ. Over residues 906–928 the composition is skewed to low complexity; sequence TSPKTYGGPGTSSSGRGSSAPGS. Residues 938–960 are compositionally biased toward polar residues; it reads TEKTANGTMPRSKRQSYSASSGY. A coiled-coil region spans residues 990-1027; the sequence is LVRQADEIRHRQWQLKKELEEAKRAIGQEEDAKMIANS.

It belongs to the TRAFAC class myosin-kinesin ATPase superfamily. Kinesin family. KIF26 subfamily. Interacts with unc-51 and unc-73. In terms of processing, phosphorylated by unc-51.

It is found in the cytoplasm. It localises to the cytoskeleton. Functionally, required for posterior migration of cells and axon growth cones during nervous system assembly. In PLM neuron, regulates innexin unc-9 gap junction turnover by suppressing unc-9 transport out of the gap junctions. This chain is Kinesin-like protein vab-8 (vab-8), found in Caenorhabditis briggsae.